Consider the following 165-residue polypeptide: Shikimate kinase (165 aa).

11–16 is an ATP binding site; it reads GAGKTT. Threonine 15 is a Mg(2+) binding site. Substrate-binding residues include aspartate 33, arginine 57, and glycine 78. Residue arginine 116 coordinates ATP. Substrate is bound at residue arginine 134.

It belongs to the shikimate kinase family. As to quaternary structure, monomer. Mg(2+) is required as a cofactor.

It localises to the cytoplasm. The enzyme catalyses shikimate + ATP = 3-phosphoshikimate + ADP + H(+). It functions in the pathway metabolic intermediate biosynthesis; chorismate biosynthesis; chorismate from D-erythrose 4-phosphate and phosphoenolpyruvate: step 5/7. Its function is as follows. Catalyzes the specific phosphorylation of the 3-hydroxyl group of shikimic acid using ATP as a cosubstrate. This Bacillus anthracis (strain A0248) protein is Shikimate kinase.